The sequence spans 585 residues: Squalene epoxidase 2, mitochondrial (585 aa).

A mitochondrion-targeting transit peptide spans 1 to 45; the sequence is MKPFVIRNLPRFQSTLRSSLLYTNHRPSSRFSLSTRRFTTGATYI. A helical membrane pass occupies residues 70–90; that stretch reads AKIALDQFIASLFTFLLLYIL. FAD is bound by residues 132 to 133, 152 to 153, Arg160, Arg231, Val247, Asp409, and Met422; these read VA and ER. 3 helical membrane-spanning segments follow: residues 493–513, 520–540, and 545–565; these read FDYLSLGGVFSSGPVALLSGL, LVLHFFAVAIYAVCRLMLPFP, and FWLGARIISSASSIIFPIIKA.

This sequence belongs to the squalene monooxygenase family. It depends on FAD as a cofactor. Expressed mainly in inflorescences. Detected in seedlings, leaves, stems, and siliques.

It is found in the mitochondrion membrane. It catalyses the reaction squalene + reduced [NADPH--hemoprotein reductase] + O2 = (S)-2,3-epoxysqualene + oxidized [NADPH--hemoprotein reductase] + H2O + H(+). The protein operates within terpene metabolism; lanosterol biosynthesis; lanosterol from farnesyl diphosphate: step 2/3. In terms of biological role, catalyzes the stereospecific oxidation of squalene to (S)-2,3-epoxysqualene, and is considered to be a rate-limiting enzyme in steroid biosynthesis. Produces primarily oxidosqualene. This chain is Squalene epoxidase 2, mitochondrial (SQE2), found in Arabidopsis thaliana (Mouse-ear cress).